The primary structure comprises 575 residues: Mitochondrial 2-methylisocitrate lyase ICL2 (575 aa).

Cys238 is an active-site residue.

The protein belongs to the isocitrate lyase/PEP mutase superfamily. Isocitrate lyase family.

It localises to the mitochondrion matrix. It catalyses the reaction (2S,3R)-3-hydroxybutane-1,2,3-tricarboxylate = pyruvate + succinate. The protein operates within organic acid metabolism; propanoate degradation. In terms of biological role, catalyzes the formation of pyruvate and succinate from 2-methylisocitrate during the metabolism of endogenous propionyl-CoA. Does not act on isocitrate. The sequence is that of Mitochondrial 2-methylisocitrate lyase ICL2 (ICL2) from Saccharomyces cerevisiae (strain ATCC 204508 / S288c) (Baker's yeast).